The primary structure comprises 448 residues: uncharacterized protein (448 aa).

Residues 19–41 (LGLLVPFLLLLFSCTNTVGYGVL) form a helical membrane-spanning segment. The 77-residue stretch at 105 to 181 (YSYATSVLDG…CFSHGLSLFD (77 aa)) folds into the SH3b domain.

The protein localises to the membrane. This is an uncharacterized protein from Treponema pallidum (strain Nichols).